The primary structure comprises 209 residues: Small ribosomal subunit protein uS4 (209 aa).

Positions 98–164 (SRLDNVVYRG…TPFIVARETA (67 aa)) constitute an S4 RNA-binding domain.

It belongs to the universal ribosomal protein uS4 family. Part of the 30S ribosomal subunit. Contacts protein S5. The interaction surface between S4 and S5 is involved in control of translational fidelity.

Its function is as follows. One of the primary rRNA binding proteins, it binds directly to 16S rRNA where it nucleates assembly of the body of the 30S subunit. With S5 and S12 plays an important role in translational accuracy. The protein is Small ribosomal subunit protein uS4 of Frankia casuarinae (strain DSM 45818 / CECT 9043 / HFP020203 / CcI3).